Reading from the N-terminus, the 396-residue chain is S-adenosylmethionine synthase 1 (396 aa).

Residue E12 participates in Mg(2+) binding. Residue H18 coordinates ATP. A K(+)-binding site is contributed by E46. E59 and Q102 together coordinate L-methionine. ATP-binding positions include 170–172 (DGK), 238–241 (SGRF), D249, 255–256 (RK), A272, K276, and K280. D249 is a binding site for L-methionine. L-methionine is bound at residue K280.

The protein belongs to the AdoMet synthase family. As to quaternary structure, homotetramer. Mn(2+) serves as cofactor. Mg(2+) is required as a cofactor. Requires Co(2+) as cofactor. The cofactor is K(+).

The protein localises to the cytoplasm. It carries out the reaction L-methionine + ATP + H2O = S-adenosyl-L-methionine + phosphate + diphosphate. It functions in the pathway amino-acid biosynthesis; S-adenosyl-L-methionine biosynthesis; S-adenosyl-L-methionine from L-methionine: step 1/1. In terms of biological role, catalyzes the formation of S-adenosylmethionine from methionine and ATP. The reaction comprises two steps that are both catalyzed by the same enzyme: formation of S-adenosylmethionine (AdoMet) and triphosphate, and subsequent hydrolysis of the triphosphate. This is S-adenosylmethionine synthase 1 (SAM1) from Oryza sativa subsp. japonica (Rice).